Here is a 59-residue protein sequence, read N- to C-terminus: Single-pass membrane and coiled-coil domain-containing protein 4 homolog (59 aa).

A compositionally biased stretch (basic residues) spans 1 to 11 (MAGRNKAKPRL). The interval 1–20 (MAGRNKAKPRLSKKEKEERR) is disordered. A coiled-coil region spans residues 10-30 (RLSKKEKEERRKDMAEVQEKV). The helical transmembrane segment at 30–50 (VFSVVVPVVVAFTVVIMLIVY) threads the bilayer.

The protein belongs to the SMCO4 family.

It is found in the membrane. In Argas monolakensis (Mono lake bird tick), this protein is Single-pass membrane and coiled-coil domain-containing protein 4 homolog.